Here is a 250-residue protein sequence, read N- to C-terminus: MPLDLNSDLGEGFGSWTMGDDAAMLDLVTSANIACGFHAGDPSIMRRTCALAAERGVRIGAHVGHRDLVGFGRRRIEIDPADLRDEVLYQIGALDGFARAAGSRVSYVKPHGALYHSAAARRDLADAVLAAMTDLDPKLVLLGPAGTELEHAATAAGVRFIGEGFADRAYTPEGRLAPRGRAGAVLDADAAVAQAVAIATEGRARVVEGGTVEVGAGSVCVHGDTPAAVEMARRIRDALAAAGVVVEAFV.

Belongs to the LamB/PxpA family. Forms a complex composed of PxpA, PxpB and PxpC.

The enzyme catalyses 5-oxo-L-proline + ATP + 2 H2O = L-glutamate + ADP + phosphate + H(+). Its function is as follows. Catalyzes the cleavage of 5-oxoproline to form L-glutamate coupled to the hydrolysis of ATP to ADP and inorganic phosphate. The sequence is that of 5-oxoprolinase subunit A from Nocardia farcinica (strain IFM 10152).